The following is a 472-amino-acid chain: Cysteine--tRNA ligase (472 aa).

Cys-29 is a binding site for Zn(2+). The 'HIGH' region motif lies at 31 to 41 (ITVYDYCHLGH). Zn(2+) contacts are provided by Cys-214, His-239, and Glu-243. The short motif at 271-275 (KMSKS) is the 'KMSKS' region element. Lys-274 serves as a coordination point for ATP.

Belongs to the class-I aminoacyl-tRNA synthetase family. As to quaternary structure, monomer. The cofactor is Zn(2+).

Its subcellular location is the cytoplasm. It carries out the reaction tRNA(Cys) + L-cysteine + ATP = L-cysteinyl-tRNA(Cys) + AMP + diphosphate. In Picosynechococcus sp. (strain ATCC 27264 / PCC 7002 / PR-6) (Agmenellum quadruplicatum), this protein is Cysteine--tRNA ligase.